The sequence spans 64 residues: Large ribosomal subunit protein bL35 (64 aa).

This sequence belongs to the bacterial ribosomal protein bL35 family.

This Pseudomonas putida (strain W619) protein is Large ribosomal subunit protein bL35.